Here is a 286-residue protein sequence, read N- to C-terminus: Shikimate dehydrogenase (NADP(+)) (286 aa).

Shikimate is bound by residues 22-24 (SLS) and T69. The active-site Proton acceptor is the K73. E85 is a binding site for NADP(+). The shikimate site is built by N94 and D109. NADP(+) contacts are provided by residues 133–137 (GAGGA) and V231. Position 233 (Y233) interacts with shikimate. G254 lines the NADP(+) pocket.

Belongs to the shikimate dehydrogenase family. In terms of assembly, homodimer.

The enzyme catalyses shikimate + NADP(+) = 3-dehydroshikimate + NADPH + H(+). It functions in the pathway metabolic intermediate biosynthesis; chorismate biosynthesis; chorismate from D-erythrose 4-phosphate and phosphoenolpyruvate: step 4/7. Its function is as follows. Involved in the biosynthesis of the chorismate, which leads to the biosynthesis of aromatic amino acids. Catalyzes the reversible NADPH linked reduction of 3-dehydroshikimate (DHSA) to yield shikimate (SA). The protein is Shikimate dehydrogenase (NADP(+)) of Alkaliphilus metalliredigens (strain QYMF).